A 120-amino-acid chain; its full sequence is MGIEMRCQDRRILLPSLLLLILMIGGVQATMKLCGRKLPETLSKLCVYGFNAMTKRTLDPVNFNQIDGFEDRSLLERLLSDSSVQMLKTRRLRDGVFDECCLKSCTMDEVLRYCAAKPRT.

Residues 1-29 (MGIEMRCQDRRILLPSLLLLILMIGGVQA) form the signal peptide. 3 disulfides stabilise this stretch: Cys34/Cys101, Cys46/Cys114, and Cys100/Cys105. Residues 51–89 (NAMTKRTLDPVNFNQIDGFEDRSLLERLLSDSSVQMLKT) constitute a propeptide, connecting peptide.

Belongs to the insulin family. As to quaternary structure, heterodimer of a B chain and an A chain linked by two disulfide bonds. Expressed at a high level in seven cells of each larval brain hemisphere that may correspond to neurosecretory cells.

It localises to the secreted. Possible ligand of InR/insulin-like receptor. This Drosophila melanogaster (Fruit fly) protein is Insulin-like peptide 3.